The sequence spans 290 residues: Triplex capsid protein 1 (290 aa).

It belongs to the herpesviridae TRX1 protein family. As to quaternary structure, interacts with TRX2, MCP and capsid vertex component 2/CVC2.

Its subcellular location is the virion. The protein localises to the host nucleus. Its function is as follows. Structural component of the T=16 icosahedral capsid. The capsid is composed of pentamers and hexamers of major capsid protein/MCP, which are linked together by heterotrimers called triplexes. These triplexes are formed by a single molecule of triplex protein 1/TRX1 and two copies of triplex protein 2/TRX2. Additionally, TRX1 is required for efficient transport of TRX2 to the nucleus, which is the site of capsid assembly. The chain is Triplex capsid protein 1 from Human cytomegalovirus (strain AD169) (HHV-5).